A 379-amino-acid chain; its full sequence is UDP-4-amino-4-deoxy-L-arabinose--oxoglutarate aminotransferase (379 aa).

K182 is subject to N6-(pyridoxal phosphate)lysine.

This sequence belongs to the DegT/DnrJ/EryC1 family. ArnB subfamily. As to quaternary structure, homodimer. Pyridoxal 5'-phosphate serves as cofactor.

The enzyme catalyses UDP-4-amino-4-deoxy-beta-L-arabinose + 2-oxoglutarate = UDP-beta-L-threo-pentopyranos-4-ulose + L-glutamate. It functions in the pathway nucleotide-sugar biosynthesis; UDP-4-deoxy-4-formamido-beta-L-arabinose biosynthesis; UDP-4-deoxy-4-formamido-beta-L-arabinose from UDP-alpha-D-glucuronate: step 2/3. It participates in bacterial outer membrane biogenesis; lipopolysaccharide biosynthesis. In terms of biological role, catalyzes the conversion of UDP-4-keto-arabinose (UDP-Ara4O) to UDP-4-amino-4-deoxy-L-arabinose (UDP-L-Ara4N). The modified arabinose is attached to lipid A and is required for resistance to polymyxin and cationic antimicrobial peptides. This chain is UDP-4-amino-4-deoxy-L-arabinose--oxoglutarate aminotransferase, found in Escherichia fergusonii (strain ATCC 35469 / DSM 13698 / CCUG 18766 / IAM 14443 / JCM 21226 / LMG 7866 / NBRC 102419 / NCTC 12128 / CDC 0568-73).